Here is a 919-residue protein sequence, read N- to C-terminus: TRPM8 channel-associated factor 2 (919 aa).

In terms of domain architecture, Peptidase M60 spans D542–G841.

Belongs to the TCAF family. As to quaternary structure, isoform 2 interacts with TRPM8 (via N-terminus and C-terminus domains); the interaction inhibits TRPM8 channel activity. Interacts with TRPV6. In terms of tissue distribution, isoform 2 is expressed in the prostate and in cancerous prostate samples.

The protein localises to the cell membrane. Functionally, negatively regulates the plasma membrane cation channel TRPM8 activity. Involved in the recruitment of TRPM8 to the cell surface. Promotes prostate cancer cell migration stimulation in a TRPM8-dependent manner. The chain is TRPM8 channel-associated factor 2 from Homo sapiens (Human).